The primary structure comprises 215 residues: FMN-dependent NADH:quinone oxidoreductase (215 aa).

FMN is bound at residue 17–19; sequence SAS.

This sequence belongs to the azoreductase type 1 family. Homodimer. Requires FMN as cofactor.

It carries out the reaction 2 a quinone + NADH + H(+) = 2 a 1,4-benzosemiquinone + NAD(+). It catalyses the reaction N,N-dimethyl-1,4-phenylenediamine + anthranilate + 2 NAD(+) = 2-(4-dimethylaminophenyl)diazenylbenzoate + 2 NADH + 2 H(+). Functionally, quinone reductase that provides resistance to thiol-specific stress caused by electrophilic quinones. Also exhibits azoreductase activity. Catalyzes the reductive cleavage of the azo bond in aromatic azo compounds to the corresponding amines. This is FMN-dependent NADH:quinone oxidoreductase from Clostridium botulinum (strain Alaska E43 / Type E3).